Reading from the N-terminus, the 200-residue chain is Large ribosomal subunit protein uL13 (200 aa).

This sequence belongs to the universal ribosomal protein uL13 family. Component of the large ribosomal subunit. Mature ribosomes consist of a small (40S) and a large (60S) subunit. The 40S subunit contains about 32 different proteins and 1 molecule of RNA (18S). The 60S subunit contains 45 different proteins and 3 molecules of RNA (25S, 5.8S and 5S).

It is found in the cytoplasm. Component of the ribosome, a large ribonucleoprotein complex responsible for the synthesis of proteins in the cell. The small ribosomal subunit (SSU) binds messenger RNAs (mRNAs) and translates the encoded message by selecting cognate aminoacyl-transfer RNA (tRNA) molecules. The large subunit (LSU) contains the ribosomal catalytic site termed the peptidyl transferase center (PTC), which catalyzes the formation of peptide bonds, thereby polymerizing the amino acids delivered by tRNAs into a polypeptide chain. The nascent polypeptides leave the ribosome through a tunnel in the LSU and interact with protein factors that function in enzymatic processing, targeting, and the membrane insertion of nascent chains at the exit of the ribosomal tunnel. This is Large ribosomal subunit protein uL13 from Candida albicans (strain SC5314 / ATCC MYA-2876) (Yeast).